The primary structure comprises 467 residues: ATP synthase subunit beta (467 aa).

156–163 (GGAGVGKT) lines the ATP pocket.

This sequence belongs to the ATPase alpha/beta chains family. As to quaternary structure, F-type ATPases have 2 components, CF(1) - the catalytic core - and CF(0) - the membrane proton channel. CF(1) has five subunits: alpha(3), beta(3), gamma(1), delta(1), epsilon(1). CF(0) has three main subunits: a(1), b(2) and c(9-12). The alpha and beta chains form an alternating ring which encloses part of the gamma chain. CF(1) is attached to CF(0) by a central stalk formed by the gamma and epsilon chains, while a peripheral stalk is formed by the delta and b chains.

The protein localises to the cell inner membrane. The enzyme catalyses ATP + H2O + 4 H(+)(in) = ADP + phosphate + 5 H(+)(out). Functionally, produces ATP from ADP in the presence of a proton gradient across the membrane. The catalytic sites are hosted primarily by the beta subunits. This is ATP synthase subunit beta from Cupriavidus necator (strain ATCC 17699 / DSM 428 / KCTC 22496 / NCIMB 10442 / H16 / Stanier 337) (Ralstonia eutropha).